The chain runs to 741 residues: NAD(P)H-quinone oxidoreductase subunit 5, chloroplastic (741 aa).

16 consecutive transmembrane segments (helical) span residues 9 to 29 (WVIP…LFFI), 39 to 59 (IWAF…IQLS), 89 to 109 (IDPL…LVLI), 125 to 145 (FVYI…SNLI), 147 to 167 (IYFF…FWFT), 185 to 205 (GDFG…SLEF), 219 to 239 (NGIN…GAVA), 258 to 278 (TPIS…FLLA), 280 to 300 (LFPL…VGTI), 327 to 347 (LGYM…FHLI), 354 to 374 (ALLF…VGYS), 396 to 416 (TTFL…CFWS), 425 to 445 (WLYS…TAFY), 542 to 562 (LFPL…GISF), 605 to 625 (AISS…LYGS), and 721 to 741 (ISSY…FFIS).

This sequence belongs to the complex I subunit 5 family. NDH is composed of at least 16 different subunits, 5 of which are encoded in the nucleus.

The protein resides in the plastid. It is found in the chloroplast thylakoid membrane. The enzyme catalyses a plastoquinone + NADH + (n+1) H(+)(in) = a plastoquinol + NAD(+) + n H(+)(out). It carries out the reaction a plastoquinone + NADPH + (n+1) H(+)(in) = a plastoquinol + NADP(+) + n H(+)(out). In terms of biological role, NDH shuttles electrons from NAD(P)H:plastoquinone, via FMN and iron-sulfur (Fe-S) centers, to quinones in the photosynthetic chain and possibly in a chloroplast respiratory chain. The immediate electron acceptor for the enzyme in this species is believed to be plastoquinone. Couples the redox reaction to proton translocation, and thus conserves the redox energy in a proton gradient. The protein is NAD(P)H-quinone oxidoreductase subunit 5, chloroplastic (ndhF) of Lolium perenne (Perennial ryegrass).